The chain runs to 246 residues: Probable transcriptional regulatory protein ACP_0521 (246 aa).

It belongs to the TACO1 family.

Its subcellular location is the cytoplasm. The protein is Probable transcriptional regulatory protein ACP_0521 of Acidobacterium capsulatum (strain ATCC 51196 / DSM 11244 / BCRC 80197 / JCM 7670 / NBRC 15755 / NCIMB 13165 / 161).